We begin with the raw amino-acid sequence, 121 residues long: Large ribosomal subunit protein bL19 (121 aa).

It belongs to the bacterial ribosomal protein bL19 family.

In terms of biological role, this protein is located at the 30S-50S ribosomal subunit interface and may play a role in the structure and function of the aminoacyl-tRNA binding site. The sequence is that of Large ribosomal subunit protein bL19 from Chlorobium phaeovibrioides (strain DSM 265 / 1930) (Prosthecochloris vibrioformis (strain DSM 265)).